Consider the following 348-residue polypeptide: Ephrin-4 (348 aa).

The N-terminal stretch at 1–20 (MKQFFEFLITTFLLLGLAAA) is a signal peptide. An Ephrin RBD domain is found at 21-178 (DEHIVYWNST…SQNMRLSMKV (158 aa)). N-linked (GlcNAc...) asparagine glycosylation occurs at N28. 2 disulfide bridges follow: C53–C91 and C79–C167. A glycan (N-linked (GlcNAc...) asparagine) is linked at N157. Residues 207-237 (GGQEDEDSDNDNAHLLPRDLEGSTNPKFRRP) are disordered. The GPI-anchor amidated serine moiety is linked to residue S329. Positions 330–348 (STSLSTNFAILLAVIYVLY) are cleaved as a propeptide — removed in mature form.

It belongs to the ephrin family. In terms of assembly, interacts with lat-2. In terms of processing, may undergo proteolysis by metalloprotease sup-17 to give rise to a soluble form.

The protein resides in the cell membrane. In terms of biological role, regulates the formation or stabilization of cell-cell contacts at several stages of epithelial morphogenesis. In early embryonic development, involved in ventral closure of the epidermis. During male tail morphogenesis, regulates precursor cell sorting together with mab-20 and allows the formation of distinct sensory rays. Probably acts as a ligand for lad-2 to regulate axon guidance of several neurons including SDQL, SDQR, SMD and PLN neurons during neurogenesis. In Caenorhabditis elegans, this protein is Ephrin-4 (efn-4).